Reading from the N-terminus, the 352-residue chain is MITLNTEKSFVELKHITKRFGNNTVIDDLNLAIPQGKMVTLLGPSGCGKTTVLRAVAGLEKPTEGQIFIDGEDVTERSIQQRDICMVFQSYALFPHMSLGENIGYGLKMLGRPKAEINQRVKEALALVDLEGFEDRYVDQISGGQQQRVALARALILKPKVLLFDEPLSNLDANLRRSMREKIRELQQQFNITSLYVTHDQSEAFAVSDMVLVMNKGKIMQLGAPQELYRQPASRFMASFMGDANIFPATFTADSVNIYGYLIPRPQGFAAGLSESTVGIRPEAITLSHQGEESQRCTITQVAYMGPQYEVQVDWHGQSMLLQVNATQLQPNPGDSYYLQIHPYGMFVLSEQ.

Positions 11–241 (VELKHITKRF…PASRFMASFM (231 aa)) constitute an ABC transporter domain. Residue 43 to 50 (GPSGCGKT) coordinates ATP.

Belongs to the ABC transporter superfamily. Fe(3+) ion importer (TC 3.A.1.10) family. As to quaternary structure, the complex is composed of two ATP-binding proteins (FbpC), two transmembrane proteins (FbpB) and a solute-binding protein (FbpA).

It is found in the cell inner membrane. It carries out the reaction Fe(3+)(out) + ATP + H2O = Fe(3+)(in) + ADP + phosphate + H(+). Part of the ABC transporter complex FbpABC involved in Fe(3+) ions import. Responsible for energy coupling to the transport system. This is Fe(3+) ions import ATP-binding protein FbpC 1 from Pectobacterium atrosepticum (strain SCRI 1043 / ATCC BAA-672) (Erwinia carotovora subsp. atroseptica).